The sequence spans 331 residues: D-aspartate oxidase 2 (331 aa).

Residues Asp35, Lys36, Ser43, and Gly307 each contribute to the FAD site.

Belongs to the DAMOX/DASOX family. Requires FAD as cofactor.

It is found in the cytoplasm. The enzyme catalyses D-aspartate + O2 + H2O = oxaloacetate + H2O2 + NH4(+). It catalyses the reaction D-glutamate + O2 + H2O = H2O2 + 2-oxoglutarate + NH4(+). Its function is as follows. Selectively catalyzes the oxidative deamination of acidic amino acids. May play a role in the egg-laying events and early development of the worm, in addition to quality control of the germ cells. This chain is D-aspartate oxidase 2, found in Caenorhabditis briggsae.